The sequence spans 302 residues: Snake venom metalloprotease inhibitor 02A10 (302 aa).

Positions 1–23 are cleaved as a signal peptide; the sequence is MSVSRLAASGLLLVSLLALALDG. Residues 24 to 47 constitute a propeptide that is removed on maturation; sequence KPVEKWSPWLWPPRPRPPIPPLQQ. Positions 32 to 302 are disordered; sequence WLWPPRPRPP…CPKLPPSGGH (271 aa). Residues 33–44 are compositionally biased toward pro residues; the sequence is LWPPRPRPPIPP. Gln48 is subject to Pyrrolidone carboxylic acid. A propeptide spanning residues 51 to 58 is cleaved from the precursor; that stretch reads LDPPIPQQ. At Gln59 the chain carries Pyrrolidone carboxylic acid. Residues 62 to 69 constitute a propeptide that is removed on maturation; it reads LDPPIPQQ. The residue at position 70 (Gln70) is a Pyrrolidone carboxylic acid. Positions 73-80 are excised as a propeptide; that stretch reads LDPPIPQQ. Gln81 carries the pyrrolidone carboxylic acid modification. Positions 84–91 are excised as a propeptide; it reads LNPPIPQQ. Gln92 bears the Pyrrolidone carboxylic acid mark. A propeptide spanning residues 95–102 is cleaved from the precursor; that stretch reads LDPPIPQQ. Residue Gln103 is modified to Pyrrolidone carboxylic acid. Residues 106-113 constitute a propeptide that is removed on maturation; it reads LNPPIPQQ. Pyrrolidone carboxylic acid is present on Gln114. A propeptide spanning residues 117-124 is cleaved from the precursor; that stretch reads LNPPIPQQ. Pyrrolidone carboxylic acid is present on Gln125. A propeptide spanning residues 128–135 is cleaved from the precursor; that stretch reads LNPPIPQQ. A Pyrrolidone carboxylic acid modification is found at Gln136. A propeptide spanning residues 139 to 146 is cleaved from the precursor; sequence LNPPIPQQ. Residue Gln147 is modified to Pyrrolidone carboxylic acid. Positions 150–157 are excised as a propeptide; that stretch reads LDPPIPQQ. Gln158 carries the post-translational modification Pyrrolidone carboxylic acid. Residues 161-168 constitute a propeptide that is removed on maturation; it reads LDPPIPQQ. Gln169 is subject to Pyrrolidone carboxylic acid. Residues 172 to 179 constitute a propeptide that is removed on maturation; it reads LDPPIPQQ. Gln180 carries the pyrrolidone carboxylic acid modification. A propeptide spanning residues 183–190 is cleaved from the precursor; the sequence is LNPPIPQQ. Gln191 carries the post-translational modification Pyrrolidone carboxylic acid. Positions 194-201 are excised as a propeptide; sequence LDPPIPQQ. A Pyrrolidone carboxylic acid modification is found at Gln202. The propeptide occupies 205–212; the sequence is LDPPIPQQ. Gln213 carries the pyrrolidone carboxylic acid modification. The propeptide occupies 216 to 223; sequence LNPPIPQQ. Gln224 carries the pyrrolidone carboxylic acid modification. Positions 227–273 are excised as a propeptide; sequence QRPLQPEVPSLMELHQERQKQGRMMHHDEDPGDAAEGPRRQKKEPGK. 2 stretches are compositionally biased toward basic and acidic residues: residues 240-255 and 262-273; these read LHQERQKQGRMMHHDE and EGPRRQKKEPGK. Cys279 and Cys293 form a disulfide bridge. Positions 294-302 are excised as a propeptide; it reads PKLPPSGGH.

The protein in the C-terminal section; belongs to the natriuretic peptide family. In terms of tissue distribution, expressed by the venom gland.

It localises to the secreted. Functionally, pEKW peptides may serve as metalloproteinase inhibitors during glandular storage. Their inhibition may be instantly disengaged, by dilution or physiochemical change, when venom is injected into tissue of the victim. Exhibits hypotensive and vasodepressor activity. Acts by activating natriuretic receptors (NPR1 and/or NPR2 and/or NPR3). The protein is Snake venom metalloprotease inhibitor 02A10 (Svmpi-Cce12) of Cerastes cerastes (Horned desert viper).